A 77-amino-acid polypeptide reads, in one-letter code: Acyl carrier protein (77 aa).

Residues 1–75 form the Carrier domain; it reads MVFEKVKDII…DVVNYIKAHT (75 aa). Residue Ser-35 is modified to O-(pantetheine 4'-phosphoryl)serine.

The protein belongs to the acyl carrier protein (ACP) family. 4'-phosphopantetheine is transferred from CoA to a specific serine of apo-ACP by AcpS. This modification is essential for activity because fatty acids are bound in thioester linkage to the sulfhydryl of the prosthetic group.

Its subcellular location is the cytoplasm. It participates in lipid metabolism; fatty acid biosynthesis. Its function is as follows. Carrier of the growing fatty acid chain in fatty acid biosynthesis. This Clostridium acetobutylicum (strain ATCC 824 / DSM 792 / JCM 1419 / IAM 19013 / LMG 5710 / NBRC 13948 / NRRL B-527 / VKM B-1787 / 2291 / W) protein is Acyl carrier protein.